The following is a 1257-amino-acid chain: Neural cell adhesion molecule L1 (1257 aa).

An N-terminal signal peptide occupies residues 1-19; the sequence is MVVALRYVWPLLLCSPCLL. The Extracellular portion of the chain corresponds to 20–1120; it reads IQIPEEYEGH…RLPPAGFATE (1101 aa). 6 consecutive Ig-like C2-type domains span residues 35–125, 139–226, 240–328, 333–420, 425–507, and 518–607; these read PVIT…TAMS, PKET…EPID, PRLL…YYVT, PYWL…AYIY, PAKI…NNVT, and TQIT…AQLL. 2 disulfide bridges follow: C57-C114 and C158-C209. N-linked (GlcNAc...) asparagine glycosylation is found at N100, N203, N247, and N294. Intrachain disulfides connect C264–C312 and C354–C404. Residues N433, N479, N490, and N505 are each glycosylated (N-linked (GlcNAc...) asparagine). C448 and C497 are joined by a disulfide. The cysteines at positions 539 and 591 are disulfide-linked. The Cell attachment site motif lies at 554–556; that stretch reads RGD. N-linked (GlcNAc...) asparagine glycosylation is found at N588 and N671. Fibronectin type-III domains follow at residues 615–712, 717–810, 814–916, 920–1015, and 1016–1115; these read VPRL…TPEA, NPVD…SGED, AIPE…TPEG, HPEA…MALS, and GISD…LPPA. The segment at 698 to 725 is disordered; the sequence is GEPSPVSETVVTPEAAPEKNPVDVKGEG. The segment covering 713-725 has biased composition (basic and acidic residues); the sequence is APEKNPVDVKGEG. N-linked (GlcNAc...) asparagine glycosylation is found at N726, N777, N825, N849, N876, N979, N1022, N1030, N1071, and N1105. The chain crosses the membrane as a helical span at residues 1121 to 1143; that stretch reads GWFIGFVSAIILLLLVLLILCFI. Over 1144–1257 the chain is Cytoplasmic; it reads KRSKGGKYSV…SPINPAVALE (114 aa). Phosphoserine is present on residues S1163, T1172, R1177, and S1178. Over residues 1176-1187 the composition is skewed to basic and acidic residues; sequence YRSLESDNEEKA. Disordered regions lie at residues 1176-1207 and 1226-1257; these read YRSL…SDDS and IGQY…VALE. Position 1181 is a phosphoserine; by CaMK2 (S1181). Phosphoserine is present on residues S1194, S1243, S1244, and S1248. A compositionally biased stretch (polar residues) spans 1241-1250; sequence NDSSGATSPI.

This sequence belongs to the immunoglobulin superfamily. L1/neurofascin/NgCAM family. Interacts with SHTN1; the interaction occurs in axonal growth cones. Interacts with isoform 2 of BSG.

It localises to the cell membrane. It is found in the cell projection. Its subcellular location is the growth cone. The protein resides in the axon. The protein localises to the dendrite. Its function is as follows. Neural cell adhesion molecule involved in the dynamics of cell adhesion and in the generation of transmembrane signals at tyrosine kinase receptors. During brain development, critical in multiple processes, including neuronal migration, axonal growth and fasciculation, and synaptogenesis. In the mature brain, plays a role in the dynamics of neuronal structure and function, including synaptic plasticity. The chain is Neural cell adhesion molecule L1 (L1CAM) from Homo sapiens (Human).